The following is a 357-amino-acid chain: 3-isopropylmalate dehydrogenase (357 aa).

4 residues coordinate substrate: R97, R107, R135, and D224. Residues D224, D248, and D252 each coordinate Mg(2+). 282-294 (GSAPDIAGQDLAN) provides a ligand contact to NAD(+).

Belongs to the isocitrate and isopropylmalate dehydrogenases family. LeuB type 1 subfamily. In terms of assembly, homodimer. It depends on Mg(2+) as a cofactor. Requires Mn(2+) as cofactor.

It localises to the cytoplasm. The catalysed reaction is (2R,3S)-3-isopropylmalate + NAD(+) = 4-methyl-2-oxopentanoate + CO2 + NADH. It participates in amino-acid biosynthesis; L-leucine biosynthesis; L-leucine from 3-methyl-2-oxobutanoate: step 3/4. In terms of biological role, catalyzes the oxidation of 3-carboxy-2-hydroxy-4-methylpentanoate (3-isopropylmalate) to 3-carboxy-4-methyl-2-oxopentanoate. The product decarboxylates to 4-methyl-2 oxopentanoate. The sequence is that of 3-isopropylmalate dehydrogenase from Prochlorococcus marinus (strain MIT 9313).